We begin with the raw amino-acid sequence, 313 residues long: Fe-S cluster assembly protein dre2 (313 aa).

Disordered stretches follow at residues 1 to 25 and 151 to 187; these read MSIT…SQKR and GRKK…AQNN. The segment at 20 to 145 is N-terminal SAM-like domain; that stretch reads NGSQKRNLLL…FEKPVQEAAV (126 aa). The linker stretch occupies residues 146 to 203; sequence PLKLGGRKKKDKTNGVNGVQNGVATNGASTNGVGMFDPAQNNDDELIDEDALLSDDDL. Over residues 159–177 the composition is skewed to polar residues; sequence NGVNGVQNGVATNGASTNG. Residues Cys213, Cys225, Cys228, and Cys230 each contribute to the [2Fe-2S] cluster site. Residues 213-230 form a fe-S binding site A region; the sequence is CVPETAKKRRRPCKDCTC. Cys276, Cys279, Cys287, and Cys290 together coordinate [4Fe-4S] cluster. 2 short sequence motifs (cx2C motif) span residues 276 to 279 and 287 to 290; these read CNSC and CSSC. Residues 276–290 form a fe-S binding site B region; the sequence is CNSCSLGDAFRCSSC.

This sequence belongs to the anamorsin family. As to quaternary structure, monomer. Interacts with tah18. Interacts with mia40. [2Fe-2S] cluster is required as a cofactor. Requires [4Fe-4S] cluster as cofactor.

Its subcellular location is the cytoplasm. It localises to the mitochondrion intermembrane space. Its function is as follows. Component of the cytosolic iron-sulfur (Fe-S) protein assembly (CIA) machinery required for the maturation of extramitochondrial Fe-S proteins. Part of an electron transfer chain functioning in an early step of cytosolic Fe-S biogenesis, facilitating the de novo assembly of a [4Fe-4S] cluster on the scaffold complex cfd1-nbp35. Electrons are transferred to dre2 from NADPH via the FAD- and FMN-containing protein tah18. Tah18-dre2 are also required for the assembly of the diferric tyrosyl radical cofactor of ribonucleotide reductase (RNR), probably by providing electrons for reduction during radical cofactor maturation in the catalytic small subunit rnr2. This chain is Fe-S cluster assembly protein dre2, found in Aspergillus flavus (strain ATCC 200026 / FGSC A1120 / IAM 13836 / NRRL 3357 / JCM 12722 / SRRC 167).